The following is a 406-amino-acid chain: Multifunctional CCA protein (406 aa).

Residues G8 and R11 each contribute to the ATP site. G8 and R11 together coordinate CTP. Positions 21 and 23 each coordinate Mg(2+). ATP is bound by residues R91, R137, and R140. Positions 91, 137, and 140 each coordinate CTP. The region spanning 228 to 329 is the HD domain; it reads TGIHTLMVAQ…IKILNKFDVW (102 aa).

This sequence belongs to the tRNA nucleotidyltransferase/poly(A) polymerase family. Bacterial CCA-adding enzyme type 1 subfamily. As to quaternary structure, monomer. Can also form homodimers and oligomers. It depends on Mg(2+) as a cofactor. Ni(2+) is required as a cofactor.

It catalyses the reaction a tRNA precursor + 2 CTP + ATP = a tRNA with a 3' CCA end + 3 diphosphate. The catalysed reaction is a tRNA with a 3' CCA end + 2 CTP + ATP = a tRNA with a 3' CCACCA end + 3 diphosphate. Catalyzes the addition and repair of the essential 3'-terminal CCA sequence in tRNAs without using a nucleic acid template. Adds these three nucleotides in the order of C, C, and A to the tRNA nucleotide-73, using CTP and ATP as substrates and producing inorganic pyrophosphate. tRNA 3'-terminal CCA addition is required both for tRNA processing and repair. Also involved in tRNA surveillance by mediating tandem CCA addition to generate a CCACCA at the 3' terminus of unstable tRNAs. While stable tRNAs receive only 3'-terminal CCA, unstable tRNAs are marked with CCACCA and rapidly degraded. This chain is Multifunctional CCA protein, found in Vibrio campbellii (strain ATCC BAA-1116).